The primary structure comprises 633 residues: Carbon monoxide dehydrogenase 2 (633 aa).

[4Fe-4S] cluster-binding residues include Cys-44, Cys-53, Cys-56, Cys-61, and Cys-73. Residues His-264, Cys-343, Cys-453, Cys-484, and Cys-525 each contribute to the [Ni-4Fe-5S] cluster site.

It belongs to the Ni-containing carbon monoxide dehydrogenase family. In terms of assembly, homodimer. [4Fe-4S] cluster is required as a cofactor. The cofactor is [Ni-4Fe-5S] cluster.

The enzyme catalyses CO + 2 oxidized [2Fe-2S]-[ferredoxin] + H2O = 2 reduced [2Fe-2S]-[ferredoxin] + CO2 + 2 H(+). Functionally, CODH oxidizes carbon monoxide coupled, via CooF, to the reduction of a hydrogen cation by a hydrogenase (possibly CooH). The polypeptide is Carbon monoxide dehydrogenase 2 (cooS2) (Methanosarcina acetivorans (strain ATCC 35395 / DSM 2834 / JCM 12185 / C2A)).